The following is a 473-amino-acid chain: Putative malate dehydrogenase 1B (473 aa).

This sequence belongs to the LDH/MDH superfamily. MDH type 2 family.

This is Putative malate dehydrogenase 1B (MDH1B) from Bos taurus (Bovine).